A 305-amino-acid polypeptide reads, in one-letter code: tRNA pseudouridine synthase B (305 aa).

Aspartate 39 acts as the Nucleophile in catalysis.

Belongs to the pseudouridine synthase TruB family. Type 1 subfamily.

It carries out the reaction uridine(55) in tRNA = pseudouridine(55) in tRNA. Functionally, responsible for synthesis of pseudouridine from uracil-55 in the psi GC loop of transfer RNAs. This is tRNA pseudouridine synthase B from Staphylococcus aureus (strain MRSA252).